We begin with the raw amino-acid sequence, 353 residues long: Peptide chain release factor 1 (353 aa).

Residue Gln230 is modified to N5-methylglutamine.

The protein belongs to the prokaryotic/mitochondrial release factor family. In terms of processing, methylated by PrmC. Methylation increases the termination efficiency of RF1.

The protein resides in the cytoplasm. Functionally, peptide chain release factor 1 directs the termination of translation in response to the peptide chain termination codons UAG and UAA. This chain is Peptide chain release factor 1, found in Gluconobacter oxydans (strain 621H) (Gluconobacter suboxydans).